A 313-amino-acid chain; its full sequence is Olfactory receptor 5H1 (313 aa).

Residues 1–28 lie on the Extracellular side of the membrane; it reads MEEENATLLTEFVLTGFLYQPQWKIPLF. An N-linked (GlcNAc...) asparagine glycan is attached at asparagine 5. The helical transmembrane segment at 29-49 threads the bilayer; it reads LAFLVIYLITIMGNLGLIAVI. Topologically, residues 50 to 56 are cytoplasmic; that stretch reads WKDPHLH. Residues 57-77 form a helical membrane-spanning segment; that stretch reads IPMYLLLGNLAFVDAWISSTV. Topologically, residues 78–98 are extracellular; the sequence is TPKMLNNFLAKSKMISLSECK. Cysteines 97 and 179 form a disulfide. A helical membrane pass occupies residues 99–119; that stretch reads IQFFSFAISVTTECFLLATMA. Residues 120 to 143 are Cytoplasmic-facing; that stretch reads YDRYVAICKPLLYPAIMTNGLCIR. Residues 144–164 form a helical membrane-spanning segment; it reads LLILSYVGGILHALIHEGFLF. Over 165–195 the chain is Extracellular; sequence RLTFCNSNIVHHIYCDTIPLSKISCTDSSIN. A helical transmembrane segment spans residues 196-216; sequence FLMVFIFSGSIQVFSIVTILV. The Cytoplasmic segment spans residues 217–240; that stretch reads SYTFVLFAILKKKSDKGVRKAFST. Residues 241–261 form a helical membrane-spanning segment; that stretch reads CGAHLFSVSLYYGPLLFIYVG. Over 262–271 the chain is Extracellular; that stretch reads PASPQADDQD. A helical transmembrane segment spans residues 272–292; sequence MVEPLFYTVIIPLLNPIIYSL. Topologically, residues 293–313 are cytoplasmic; that stretch reads RNKQVTVSFTKMLKKHVKVSY.

Belongs to the G-protein coupled receptor 1 family.

It localises to the cell membrane. Its function is as follows. Odorant receptor. This Homo sapiens (Human) protein is Olfactory receptor 5H1 (OR5H1).